Reading from the N-terminus, the 441-residue chain is Inner kinetochore subunit mis17 (441 aa).

Positions 160–173 (SSILENSPPNKVQR) are enriched in polar residues. Residues 160–240 (SSILENSPPN…TSSMAPRNLL (81 aa)) form a disordered region. Residues 174 to 183 (LSSLDSSQDS) are compositionally biased toward low complexity. The span at 192–201 (VTGTTFSSQA) shows a compositional bias: polar residues. Positions 217–233 (SLTNQSSSLQSSLQTSS) are enriched in low complexity.

This sequence belongs to the CENP-U/AME1 family. Component of the heterotetrameric kinetochore subcomplex COMA, which consists of fta2, fta7, mal2 and mis17. The COMA subcomplex is part of a larger constitutive centromere-associated network (CCAN) (also known as central kinetochore Sim4 complex in fission yeast), which is composed of at least cnl2, cnp3, cnp20, fta1, fta2, fta3, fta4, fta6, fta7, mal2, mhf1, mhf2, mis6, mis15, mis17, sim4 and wip1. Interacts with mis6 and mis15.

It localises to the nucleus. The protein localises to the chromosome. The protein resides in the centromere. Its subcellular location is the kinetochore. In terms of biological role, component of the kinetochore, a multiprotein complex that assembles on centromeric DNA and attaches chromosomes to spindle microtubules, mediating chromosome segregation and sister chromatid segregation during meiosis and mitosis. Component of the inner kinetochore COMA complex, which connects centromere-associated proteins and the outer kinetochore. COMA interacts with other inner kinetochore proteins to form the inner kinetochore constitutive centromere-associated network (CCAN), which serves as a structural platform for outer kinetochore assembly. This is Inner kinetochore subunit mis17 (mis17) from Schizosaccharomyces pombe (strain 972 / ATCC 24843) (Fission yeast).